We begin with the raw amino-acid sequence, 159 residues long: 2-C-methyl-D-erythritol 2,4-cyclodiphosphate synthase (159 aa).

A divalent metal cation is bound by residues Asp-10 and His-12. 4-CDP-2-C-methyl-D-erythritol 2-phosphate is bound by residues 10–12 and 36–37; these read DVH and HS. His-44 lines the a divalent metal cation pocket. Residues 58-60, 63-67, 102-108, 134-137, Phe-141, and Arg-144 contribute to the 4-CDP-2-C-methyl-D-erythritol 2-phosphate site; these read DIG, FPDTD, AQAPKMA, and TTTE.

The protein belongs to the IspF family. In terms of assembly, homotrimer. A divalent metal cation is required as a cofactor.

It carries out the reaction 4-CDP-2-C-methyl-D-erythritol 2-phosphate = 2-C-methyl-D-erythritol 2,4-cyclic diphosphate + CMP. The protein operates within isoprenoid biosynthesis; isopentenyl diphosphate biosynthesis via DXP pathway; isopentenyl diphosphate from 1-deoxy-D-xylulose 5-phosphate: step 4/6. Functionally, involved in the biosynthesis of isopentenyl diphosphate (IPP) and dimethylallyl diphosphate (DMAPP), two major building blocks of isoprenoid compounds. Catalyzes the conversion of 4-diphosphocytidyl-2-C-methyl-D-erythritol 2-phosphate (CDP-ME2P) to 2-C-methyl-D-erythritol 2,4-cyclodiphosphate (ME-CPP) with a corresponding release of cytidine 5-monophosphate (CMP). The chain is 2-C-methyl-D-erythritol 2,4-cyclodiphosphate synthase from Shewanella halifaxensis (strain HAW-EB4).